A 409-amino-acid chain; its full sequence is SPI-1 type 3 secretion system translocon protein SctB (409 aa).

A helical membrane pass occupies residues 119–140; it reads ISGMSSSAVALLAAANTLMLTL. Over residues 350–368 the composition is skewed to polar residues; sequence ERSEQQISQVNNRVASTAS. A disordered region spans residues 350–378; sequence ERSEQQISQVNNRVASTASDEARESSRKS.

Belongs to the SctB/SipC family. The core secretion machinery of the T3SS is composed of approximately 20 different proteins, including cytoplasmic components, a base, an export apparatus and a needle. This subunit is involved in the formation of a pore, called the translocon, in host membrane.

It localises to the secreted. It is found in the host membrane. Its function is as follows. Component of the type III secretion system 1 (SPI-1 T3SS), also called injectisome, which is used to inject bacterial effector proteins into eukaryotic host cells. SipB/SctE1 and SipC/SctB1 are inserted into the host membrane where they form a pore and allow the translocation of effector proteins into the cytosol of target cells. The chain is SPI-1 type 3 secretion system translocon protein SctB from Salmonella typhi.